Reading from the N-terminus, the 133-residue chain is ATP synthase epsilon chain, chloroplastic (133 aa).

The protein belongs to the ATPase epsilon chain family. In terms of assembly, F-type ATPases have 2 components, CF(1) - the catalytic core - and CF(0) - the membrane proton channel. CF(1) has five subunits: alpha(3), beta(3), gamma(1), delta(1), epsilon(1). CF(0) has three main subunits: a, b and c.

Its subcellular location is the plastid. It localises to the chloroplast thylakoid membrane. Functionally, produces ATP from ADP in the presence of a proton gradient across the membrane. The chain is ATP synthase epsilon chain, chloroplastic from Zygnema circumcarinatum (Green alga).